The sequence spans 171 residues: Crossover junction endodeoxyribonuclease RuvC (171 aa).

Catalysis depends on residues Asp-7, Glu-66, and Asp-138. Residues Asp-7, Glu-66, and Asp-138 each coordinate Mg(2+).

This sequence belongs to the RuvC family. As to quaternary structure, homodimer which binds Holliday junction (HJ) DNA. The HJ becomes 2-fold symmetrical on binding to RuvC with unstacked arms; it has a different conformation from HJ DNA in complex with RuvA. In the full resolvosome a probable DNA-RuvA(4)-RuvB(12)-RuvC(2) complex forms which resolves the HJ. The cofactor is Mg(2+).

The protein localises to the cytoplasm. The catalysed reaction is Endonucleolytic cleavage at a junction such as a reciprocal single-stranded crossover between two homologous DNA duplexes (Holliday junction).. The RuvA-RuvB-RuvC complex processes Holliday junction (HJ) DNA during genetic recombination and DNA repair. Endonuclease that resolves HJ intermediates. Cleaves cruciform DNA by making single-stranded nicks across the HJ at symmetrical positions within the homologous arms, yielding a 5'-phosphate and a 3'-hydroxyl group; requires a central core of homology in the junction. The consensus cleavage sequence is 5'-(A/T)TT(C/G)-3'. Cleavage occurs on the 3'-side of the TT dinucleotide at the point of strand exchange. HJ branch migration catalyzed by RuvA-RuvB allows RuvC to scan DNA until it finds its consensus sequence, where it cleaves and resolves the cruciform DNA. This Francisella tularensis subsp. mediasiatica (strain FSC147) protein is Crossover junction endodeoxyribonuclease RuvC.